The sequence spans 96 residues: Myticin-A (96 aa).

A signal peptide spans 1 to 20; it reads MKATILLAVLVAVFVAGTEA. A propeptide spans 61–96 (removed in mature form); that stretch reads VNNPFRVNQVAKSINDLDYTPIMKSMENLDNGMDML.

In terms of processing, contains four disulfide bonds. Hemocytes.

The protein localises to the secreted. Its function is as follows. Bacteriolytic activity against Gram-positive bacteria M.luteus, B.megaterium and A.viridans. The polypeptide is Myticin-A (Mytilus galloprovincialis (Mediterranean mussel)).